Consider the following 296-residue polypeptide: Glycine--tRNA ligase alpha subunit (296 aa).

Belongs to the class-II aminoacyl-tRNA synthetase family. In terms of assembly, tetramer of two alpha and two beta subunits.

The protein localises to the cytoplasm. It carries out the reaction tRNA(Gly) + glycine + ATP = glycyl-tRNA(Gly) + AMP + diphosphate. The sequence is that of Glycine--tRNA ligase alpha subunit from Listeria innocua serovar 6a (strain ATCC BAA-680 / CLIP 11262).